A 172-amino-acid chain; its full sequence is Small ribosomal subunit protein uS5 (172 aa).

The 64-residue stretch at 17–80 folds into the S5 DRBM domain; it reads MREKMIAVNR…EECRRNLVKV (64 aa).

This sequence belongs to the universal ribosomal protein uS5 family. In terms of assembly, part of the 30S ribosomal subunit. Contacts proteins S4 and S8.

In terms of biological role, with S4 and S12 plays an important role in translational accuracy. Functionally, located at the back of the 30S subunit body where it stabilizes the conformation of the head with respect to the body. This Paracidovorax citrulli (strain AAC00-1) (Acidovorax citrulli) protein is Small ribosomal subunit protein uS5.